Consider the following 266-residue polypeptide: F-actin-capping protein subunit beta (266 aa).

This sequence belongs to the F-actin-capping protein beta subunit family. As to quaternary structure, component of the F-actin capping complex, composed of a heterodimer of an alpha and a beta subunit.

The protein localises to the cytoplasm. It is found in the cytoskeleton. The protein resides in the actin patch. Its function is as follows. F-actin-capping proteins bind in a Ca(2+)-independent manner to the fast growing ends of actin filaments (barbed end) thereby blocking the exchange of subunits at these ends. Unlike other capping proteins (such as gelsolin and severin), these proteins do not sever actin filaments. This Aspergillus oryzae (strain ATCC 42149 / RIB 40) (Yellow koji mold) protein is F-actin-capping protein subunit beta (cap2).